The sequence spans 305 residues: Tyrosine recombinase XerC (305 aa).

A Core-binding (CB) domain is found at 2–88; the sequence is TNKQRLVHLF…ALRSFYKFLL (87 aa). Residues 109–295 form the Tyr recombinase domain; that stretch reads RIPSFLYEEE…SKDSLRKTYM (187 aa). Residues Arg149, Lys173, His247, Arg250, and His273 contribute to the active site. Tyr282 (O-(3'-phospho-DNA)-tyrosine intermediate) is an active-site residue.

This sequence belongs to the 'phage' integrase family. XerC subfamily. In terms of assembly, forms a cyclic heterotetrameric complex composed of two molecules of XerC and two molecules of XerD.

It is found in the cytoplasm. Functionally, site-specific tyrosine recombinase, which acts by catalyzing the cutting and rejoining of the recombining DNA molecules. The XerC-XerD complex is essential to convert dimers of the bacterial chromosome into monomers to permit their segregation at cell division. It also contributes to the segregational stability of plasmids. The chain is Tyrosine recombinase XerC from Bacillus pumilus (strain SAFR-032).